Reading from the N-terminus, the 424-residue chain is Gamma-glutamyl phosphate reductase (424 aa).

The protein belongs to the gamma-glutamyl phosphate reductase family.

Its subcellular location is the cytoplasm. The catalysed reaction is L-glutamate 5-semialdehyde + phosphate + NADP(+) = L-glutamyl 5-phosphate + NADPH + H(+). The protein operates within amino-acid biosynthesis; L-proline biosynthesis; L-glutamate 5-semialdehyde from L-glutamate: step 2/2. Functionally, catalyzes the NADPH-dependent reduction of L-glutamate 5-phosphate into L-glutamate 5-semialdehyde and phosphate. The product spontaneously undergoes cyclization to form 1-pyrroline-5-carboxylate. The chain is Gamma-glutamyl phosphate reductase from Dehalococcoides mccartyi (strain ATCC BAA-2266 / KCTC 15142 / 195) (Dehalococcoides ethenogenes (strain 195)).